Reading from the N-terminus, the 88-residue chain is Phosphocarrier protein HPr (88 aa).

Residues 1–88 (MEKRDFHVVA…ETMKKEGLSE (88 aa)) enclose the HPr domain. The Pros-phosphohistidine intermediate role is filled by H15. Phosphoserine; by HPrK/P is present on S46.

This sequence belongs to the HPr family.

The protein localises to the cytoplasm. Phosphorylation on Ser-46 inhibits the phosphoryl transfer from enzyme I to HPr. Its function is as follows. General (non sugar-specific) component of the phosphoenolpyruvate-dependent sugar phosphotransferase system (sugar PTS). This major carbohydrate active-transport system catalyzes the phosphorylation of incoming sugar substrates concomitantly with their translocation across the cell membrane. The phosphoryl group from phosphoenolpyruvate (PEP) is transferred to the phosphoryl carrier protein HPr by enzyme I. Phospho-HPr then transfers it to the PTS EIIA domain. In terms of biological role, P-Ser-HPr interacts with the catabolite control protein A (CcpA), forming a complex that binds to DNA at the catabolite response elements cre, operator sites preceding a large number of catabolite-regulated genes. Thus, P-Ser-HPr is a corepressor in carbon catabolite repression (CCR), a mechanism that allows bacteria to coordinate and optimize the utilization of available carbon sources. P-Ser-HPr also plays a role in inducer exclusion, in which it probably interacts with several non-PTS permeases and inhibits their transport activity. This is Phosphocarrier protein HPr (ptsH) from Latilactobacillus sakei (Lactobacillus sakei).